The primary structure comprises 170 residues: RNA pyrophosphohydrolase (170 aa).

Residues 6–149 (GFRPNVGIIL…KRDVYRRALK (144 aa)) form the Nudix hydrolase domain. A Nudix box motif is present at residues 39 to 60 (GGIKHNESPENALYRELEEEVG).

This sequence belongs to the Nudix hydrolase family. RppH subfamily. The cofactor is a divalent metal cation.

Accelerates the degradation of transcripts by removing pyrophosphate from the 5'-end of triphosphorylated RNA, leading to a more labile monophosphorylated state that can stimulate subsequent ribonuclease cleavage. The sequence is that of RNA pyrophosphohydrolase from Saccharophagus degradans (strain 2-40 / ATCC 43961 / DSM 17024).